The primary structure comprises 234 residues: uncharacterized protein (234 aa).

68–70 (GES) contacts L-glutamine. Catalysis depends on Cys101, which acts as the Nucleophile. L-glutamine is bound by residues Arg131 and 167–168 (IR). Catalysis depends on charge relay system residues His208 and Glu210.

This sequence belongs to the glutaminase PdxT/SNO family.

It is found in the cytoplasm. It catalyses the reaction L-glutamine + H2O = L-glutamate + NH4(+). This is an uncharacterized protein from Schizosaccharomyces pombe (strain 972 / ATCC 24843) (Fission yeast).